An 84-amino-acid chain; its full sequence is NAD(P)H-quinone oxidoreductase subunit O (84 aa).

Belongs to the complex I NdhO subunit family. As to quaternary structure, NDH-1 can be composed of about 15 different subunits; different subcomplexes with different compositions have been identified which probably have different functions.

The protein localises to the cellular thylakoid membrane. The enzyme catalyses a plastoquinone + NADH + (n+1) H(+)(in) = a plastoquinol + NAD(+) + n H(+)(out). The catalysed reaction is a plastoquinone + NADPH + (n+1) H(+)(in) = a plastoquinol + NADP(+) + n H(+)(out). NDH-1 shuttles electrons from an unknown electron donor, via FMN and iron-sulfur (Fe-S) centers, to quinones in the respiratory and/or the photosynthetic chain. The immediate electron acceptor for the enzyme in this species is believed to be plastoquinone. Couples the redox reaction to proton translocation, and thus conserves the redox energy in a proton gradient. Cyanobacterial NDH-1 also plays a role in inorganic carbon-concentration. The sequence is that of NAD(P)H-quinone oxidoreductase subunit O from Parasynechococcus marenigrum (strain WH8102).